The primary structure comprises 543 residues: Transmembrane protease serine 13 (543 aa).

Disordered regions lie at residues 1-96 (MDRG…TRVY) and 109-129 (RASP…PGLS). Over 1–143 (MDRGSHRNSS…SWQETQRQLP (143 aa)) the chain is Cytoplasmic. A run of 2 repeats spans residues 14-17 (TPPQ) and 18-22 (ASPAR). The 4 X 4 AA repeats of T-P-P-Q stretch occupies residues 14 to 49 (TPPQASPARTSPARAPPQASPARTPPQASPARTPPQ). The segment at 18–69 (ASPARTSPARAPPQASPARTPPQASPARTPPQASPARAPPPQASPARASPAR) is 8 X 5 AA repeats of A-S-P-A-R. A 2-2; approximate repeat occupies 23 to 27 (TSPAR). A compositionally biased stretch (pro residues) spans 27-60 (RAPPQASPARTPPQASPARTPPQASPARAPPPQA). One copy of the 1-2; approximate repeat lies at 28 to 31 (APPQ). Tandem repeats lie at residues 32–36 (ASPAR), 37–40 (TPPQ), 41–45 (ASPAR), 46–49 (TPPQ), and 50–54 (ASPAR). The 2-6; approximate repeat unit spans residues 55 to 59 (APPPQ). 2 repeat units span residues 60 to 64 (ASPAR) and 65 to 69 (ASPAR). 2 stretches are compositionally biased toward low complexity: residues 61–94 (SPAR…SPTR) and 109–120 (RASPARSAPATR). The chain crosses the membrane as a helical; Signal-anchor for type II membrane protein span at residues 144-164 (LIGCVILLISLVISLILLFYF). Topologically, residues 165-543 (WRGHTGIKYK…MESEVRFRKS (379 aa)) are extracellular. The region spanning 180–202 (CPIHAVRCDGVVDCKMKSDELGC) is the LDL-receptor class A domain. The region spanning 199-301 (ELGCVRFDWD…HCGLRAMTGR (103 aa)) is the SRCR domain. Cystine bridges form between cysteine 226/cysteine 290, cysteine 239/cysteine 293, and cysteine 327/cysteine 343. Residues asparagine 231 and asparagine 268 are each glycosylated (N-linked (GlcNAc...) asparagine). The Peptidase S1 domain occupies 302–535 (IVGGALTSES…VLPWIYRKME (234 aa)). Catalysis depends on histidine 342, which acts as the Charge relay system. Residue asparagine 381 is glycosylated (N-linked (GlcNAc...) asparagine). The active-site Charge relay system is the aspartate 390. N-linked (GlcNAc...) asparagine glycosylation is present at asparagine 421. 3 disulfide bridges follow: cysteine 424/cysteine 493, cysteine 456/cysteine 472, and cysteine 483/cysteine 511. Serine 487 (charge relay system) is an active-site residue.

The protein belongs to the peptidase S1 family. As to quaternary structure, interacts with SPINT1/HAI-1; the interaction promotes the phosphorylation and cell membrane localization of TMPRSS13. Interacts with SPINT2/HAI-2; the interaction promotes the phosphorylation and cell membrane localization of TMPRSS13. Post-translationally, the inactive zymogen is post-translationally modified and then trafficked to the cell surface, whereby it undergoes autocatalytic cleavage resulting in an activated form that is released extracellularly. Phosphorylation is required for localization at the cell surface. Phosphorylation increases following inhibition of protease activity by SPINT2/HAI-2. In terms of tissue distribution, expressed in the suprabasal squamous epithelium of the epidermis, hair follicles, oral epithelium, cornea, upper digestive tract, transitional epithelium of the bladder, prostate, heart, intestine, kidney and thymus.

Its subcellular location is the cell membrane. It localises to the secreted. The protein resides in the cytoplasm. With respect to regulation, cleavage of HGF is inhibited by SPINT1/HAI-1 via the BPTI/Kunitz inhibitor 1 domain. In terms of biological role, serine protease. Cleaves the proform of PRSS8/prostasin to form the active protein. Cleaves the proform of HGF to form the active protein which promotes MAPK signaling. Promotes the formation of the stratum corneum and subsequently the epidermal barrier in embryos. The protein is Transmembrane protease serine 13 (Tmprss13) of Mus musculus (Mouse).